The following is an 87-amino-acid chain: Large ribosomal subunit protein bL27 (87 aa).

It belongs to the bacterial ribosomal protein bL27 family.

The protein is Large ribosomal subunit protein bL27 of Dichelobacter nodosus (strain VCS1703A).